We begin with the raw amino-acid sequence, 310 residues long: Proline dehydrogenase (310 aa).

Residue lysine 98 participates in substrate binding. Aspartate 135 is a catalytic residue. FAD is bound by residues methionine 136, glutamine 166, 187–192, 229–230, and 292–295; these read RMVKGA, TH, and RIAE. Arginine 187 is an active-site residue. Residue 291–292 participates in substrate binding; the sequence is RR.

The protein belongs to the proline dehydrogenase family. Requires FAD as cofactor.

The catalysed reaction is L-proline + a quinone = (S)-1-pyrroline-5-carboxylate + a quinol + H(+). The protein operates within amino-acid degradation; L-proline degradation into L-glutamate; L-glutamate from L-proline: step 1/2. Converts proline to delta-1-pyrroline-5-carboxylate. This is Proline dehydrogenase from Deinococcus radiodurans (strain ATCC 13939 / DSM 20539 / JCM 16871 / CCUG 27074 / LMG 4051 / NBRC 15346 / NCIMB 9279 / VKM B-1422 / R1).